A 112-amino-acid chain; its full sequence is MLTTTCRRLSQALQRPHALSAVAQRCLRAPGARSYADQNEKAEQPRTFHPALLQFLVCPLSKKPLRYDASTNELINDELGIAYPIIDGVPNMIPQAARTTRQKEKQEETKQH.

Residues 1–34 constitute a mitochondrion transit peptide; it reads MLTTTCRRLSQALQRPHALSAVAQRCLRAPGARS. Positions 49-95 constitute a TRM112 domain; the sequence is HPALLQFLVCPLSKKPLRYDASTNELINDELGIAYPIIDGVPNMIPQ.

This sequence belongs to the PREY family. As to quaternary structure, interacts (via TRM112 domain) with NDUFAF5; the interaction is direct and stabilizes NDUFAF5 protein. Interacts with COQ5; the interaction is direct, stabilizes COQ5 protein and associates PYURF with COQ enzyme complex.

The protein localises to the mitochondrion. In mitochondria, S-adenosylmethionine-dependent methyltransferase chaperone that supports both coenzyme Q biosynthesis, by stabilizing its components, such as COQ5, and NADH:ubiquinone oxidoreductase complex (complex I, MT-ND1) assembly, by stabilizing complex I assembly factors, such as NDUFAF5. In Rattus norvegicus (Rat), this protein is Protein preY, mitochondrial (Pyurf).